The chain runs to 195 residues: Pyridoxal 5'-phosphate synthase subunit PdxT (195 aa).

53–55 (GES) is a binding site for L-glutamine. C82 serves as the catalytic Nucleophile. Residues R108 and 134–135 (IR) contribute to the L-glutamine site. Residues H173 and E175 each act as charge relay system in the active site.

Belongs to the glutaminase PdxT/SNO family. In terms of assembly, in the presence of PdxS, forms a dodecamer of heterodimers. Only shows activity in the heterodimer.

The enzyme catalyses aldehydo-D-ribose 5-phosphate + D-glyceraldehyde 3-phosphate + L-glutamine = pyridoxal 5'-phosphate + L-glutamate + phosphate + 3 H2O + H(+). The catalysed reaction is L-glutamine + H2O = L-glutamate + NH4(+). The protein operates within cofactor biosynthesis; pyridoxal 5'-phosphate biosynthesis. Catalyzes the hydrolysis of glutamine to glutamate and ammonia as part of the biosynthesis of pyridoxal 5'-phosphate. The resulting ammonia molecule is channeled to the active site of PdxS. This is Pyridoxal 5'-phosphate synthase subunit PdxT from Methanobrevibacter smithii (strain ATCC 35061 / DSM 861 / OCM 144 / PS).